The following is a 390-amino-acid chain: Lipid-A-disaccharide synthase (390 aa).

It belongs to the LpxB family.

The enzyme catalyses a lipid X + a UDP-2-N,3-O-bis[(3R)-3-hydroxyacyl]-alpha-D-glucosamine = a lipid A disaccharide + UDP + H(+). It participates in bacterial outer membrane biogenesis; LPS lipid A biosynthesis. Functionally, condensation of UDP-2,3-diacylglucosamine and 2,3-diacylglucosamine-1-phosphate to form lipid A disaccharide, a precursor of lipid A, a phosphorylated glycolipid that anchors the lipopolysaccharide to the outer membrane of the cell. In Rickettsia felis (strain ATCC VR-1525 / URRWXCal2) (Rickettsia azadi), this protein is Lipid-A-disaccharide synthase.